A 424-amino-acid polypeptide reads, in one-letter code: MAKNIQAIRGMNDYLPGETAIWQRIEGTLKNVLGSYGYSEIRLPIVEQTPLFKRAIGEVTDVVEKEMYTFEDRNGDSLTLRPEGTAGCVRAGIEHGLLYNQEQRLWYIGPMFRHERPQKGRYRQFHQLGAEVFGLQGPDIDAELIMLTARWWRALGIADHVSLELNSIGSLEARANYRDALVAFLEQHQETLDEDCKRRMYTNPLRVLDSKNPDVQALLNDAPALGDYLDDDSREHFAGLCKLLDAAGIAYTVNQRLVRGLDYYNRTVFEWVTNSLGSQGTVCAGGRYDGLVEQLGGRATPAVGFAMGLERLVLLVQAVNPEFIASPVVDIYLVAAGAQTQSAAMTLAERLRDEMPGVKLMTNHGGGNFKKQFARADKWGARIALVLGESEVADGTVVVKDLRSGEQTAVAQDSVAAHLRTLLG.

The protein belongs to the class-II aminoacyl-tRNA synthetase family. In terms of assembly, homodimer.

It is found in the cytoplasm. It carries out the reaction tRNA(His) + L-histidine + ATP = L-histidyl-tRNA(His) + AMP + diphosphate + H(+). This chain is Histidine--tRNA ligase, found in Salmonella agona (strain SL483).